The primary structure comprises 85 residues: Sec-independent protein translocase protein TatA (85 aa).

A helical membrane pass occupies residues M1–A21. Residues V43–R85 are disordered. Composition is skewed to basic and acidic residues over residues K44–S58 and V69–R85.

It belongs to the TatA/E family. The Tat system comprises two distinct complexes: a TatABC complex, containing multiple copies of TatA, TatB and TatC subunits, and a separate TatA complex, containing only TatA subunits. Substrates initially bind to the TatABC complex, which probably triggers association of the separate TatA complex to form the active translocon.

It is found in the cell membrane. Functionally, part of the twin-arginine translocation (Tat) system that transports large folded proteins containing a characteristic twin-arginine motif in their signal peptide across membranes. TatA could form the protein-conducting channel of the Tat system. The sequence is that of Sec-independent protein translocase protein TatA from Micrococcus luteus (strain ATCC 4698 / DSM 20030 / JCM 1464 / CCM 169 / CCUG 5858 / IAM 1056 / NBRC 3333 / NCIMB 9278 / NCTC 2665 / VKM Ac-2230) (Micrococcus lysodeikticus).